A 1372-amino-acid chain; its full sequence is uncharacterized protein (1372 aa).

Residues 1–67 (MEATDQEVML…PPAPSKNPMQ (67 aa)) form a disordered region. The segment covering 17–28 (MSTSATSSTNGG) has biased composition (polar residues). Residues 75 to 143 (NLYQTAQEQL…LEEHDRLRRK (69 aa)) adopt a coiled-coil conformation. Disordered stretches follow at residues 178 to 199 (NDLSDLGIGTSSASGKSSLSGD), 238 to 287 (HINR…QASS), 380 to 414 (EVSNGGAPAAPKLVFRDGLTNGNSATTAPKSEVRR), 427 to 447 (QSLEQQRKAFSSSKSVDVPVP), and 486 to 531 (EERM…DSGI). Composition is skewed to low complexity over residues 184–198 (GIGTSSASGKSSLSG) and 238–251 (HINRNGSNGNHGNG). Polar residues-rich tracts occupy residues 257-287 (TGPSNSSKSAGRQYISSPGYDTSSSNAQASS) and 399-408 (TNGNSATTAP). Residues 409 to 438 (KSEVRRLSGDISSIRDRMQSLEQQRKAFSS) adopt a coiled-coil conformation. Positions 486–499 (EERMRQQQQKEKHS) are enriched in basic and acidic residues. The span at 514 to 523 (ALIIEEPPVA) shows a compositional bias: low complexity. A coiled-coil region spans residues 539-580 (LQQQQQLNAAIAALALEERQLEEAANAVNQIEAEFDELTDLH). Positions 652 to 673 (VSKSGPTPNPTSTPNMVSSSPN) are enriched in low complexity. 5 disordered regions span residues 652–679 (VSKSGPTPNPTSTPNMVSSSPNCNLRRK), 799–820 (SRQLDKPPTPPAPPKKTVRSEH), 860–897 (SQSDSKSLTSPIMSPKPLPSGRIPQITPPASPKPPKRV), 1151–1181 (SSQMMKTSLPESVEKPSTPLPGRKSKIPIPK), and 1231–1250 (SPPSIPKTPEQTQLHASPTK). 2 stretches are compositionally biased toward polar residues: residues 860 to 871 (SQSDSKSLTSPI) and 1151 to 1160 (SSQMMKTSLP).

This is an uncharacterized protein from Drosophila melanogaster (Fruit fly).